A 40-amino-acid polypeptide reads, in one-letter code: VGPHLDDYGGEALHRNFEVYPQTKTYFPHFDASAGSNQLK.

One can recognise a Globin domain in the interval 1 to 40 (VGPHLDDYGGEALHRNFEVYPQTKTYFPHFDASAGSNQLK).

The protein belongs to the globin family. Heterotetramer of two alpha chains and two beta chains. Red blood cells.

Involved in oxygen transport from the lung to the various peripheral tissues. The chain is Hemoglobin subunit alpha-2 from Saara hardwickii (Indian spiny-tailed lizard).